We begin with the raw amino-acid sequence, 208 residues long: Protein JLP2 (208 aa).

A compositionally biased stretch (basic residues) spans 185-194 (AKKNQKKKNK). A disordered region spans residues 185-208 (AKKNQKKKNKQSKDEVTDDMQLEV).

The protein belongs to the CCDC25 family.

The protein localises to the cytoplasm. This is Protein JLP2 (JLP2) from Saccharomyces cerevisiae (strain ATCC 204508 / S288c) (Baker's yeast).